We begin with the raw amino-acid sequence, 195 residues long: MSLETVVEDIRDEARERAKEIRADADERADEIVAEAEADADDIIADAEAEVTAEIDQEREQQLSSAELEAKQMRLEARRDALQSVRSAVEDRIVALDGDEREELTRELLDAASTEFDGADTVRVFGRADDEALISEILDDYDGYEYAGEYDCLGGVVVESDASRIRVNNTFDSILADAWENNLKAISARLFDEEQ.

Belongs to the V-ATPase E subunit family. In terms of assembly, has multiple subunits with at least A(3), B(3), C, D, E, F, H, I and proteolipid K(x).

It is found in the cell membrane. Its function is as follows. Component of the A-type ATP synthase that produces ATP from ADP in the presence of a proton gradient across the membrane. The sequence is that of A-type ATP synthase subunit E from Halobacterium salinarum (strain ATCC 29341 / DSM 671 / R1).